Reading from the N-terminus, the 315-residue chain is FAD-linked oxidoreductase sthB (315 aa).

The FAD-binding PCMH-type domain occupies 19 to 201; the sequence is QPCSLGNYVS…LSMTSRVHAD (183 aa).

It belongs to the oxygen-dependent FAD-linked oxidoreductase family.

It carries out the reaction betaenone C = betaenone A. The enzyme catalyses stemphyloxin I = stemphyloxin II. It participates in mycotoxin biosynthesis. Functionally, FAD-linked oxidoreductase; part of the gene cluster that mediates the biosynthesis of the phytotoxin stemphyloxin II. The first step of the pathway is the synthesis of dehydroprobetaenone I by the polyketide synthase sthA and the enoyl reductase sthE via condensation of one acetyl-CoA starter unit with 7 malonyl-CoA units and 5 methylations. The C-terminal reductase (R) domain of sthA catalyzes the reductive release of the polyketide chain. Because sthA lacks a designated enoylreductase (ER) domain, the required activity is provided the enoyl reductase sthE. The short-chain dehydrogenase/reductase sthC then catalyzes reduction of dehydroprobetaenone I to probetaenone I. The cytochrome P450 monooxygenase sthF catalyzes successive epoxidation, oxidation (resulting from epoxide opening) and hydroxylation to install a tertiary alcohol in the decaline ring to yield betaenone C from dehydroprobetaenone I and betaenone B from probetaenone I. The FAD-linked oxidoreductase sthB is responsible for the conversion of betaenone C to betaenone A via an intramolecular aldol reaction between C-1 and C-17 to form the bridged tricyclic system in betaenone A. Finally, the cytochrome P450 monooxygenase sthD catalyzes the hydroxylation of C-15 to afford the final metabolite stemphyloxin II. The polypeptide is FAD-linked oxidoreductase sthB (Phaeosphaeria nodorum (strain SN15 / ATCC MYA-4574 / FGSC 10173) (Glume blotch fungus)).